A 148-amino-acid polypeptide reads, in one-letter code: Large ribosomal subunit protein bL9 (148 aa).

This sequence belongs to the bacterial ribosomal protein bL9 family.

Its function is as follows. Binds to the 23S rRNA. This Desulfatibacillum aliphaticivorans protein is Large ribosomal subunit protein bL9.